A 973-amino-acid chain; its full sequence is Sensor histidine kinase TmoS (973 aa).

The region spanning 32 to 103 is the PAS 1 domain; that stretch reads REELARIIFD…NQKRLVEAAS (72 aa). Positions 108–162 constitute a PAC 1 domain; the sequence is VRCDIEILGKSGGREVIAVDFSLLPIRDEQENIVFLLAEGRNITDKKKAEAMLAL. The Histidine kinase 1 domain occupies 187–405; that stretch reads KVSHELRTPL…LFQVKLPLNA (219 aa). Position 190 is a phosphohistidine; by autocatalysis (His-190). The region spanning 452–567 is the Response regulatory domain; sequence RVLIVEDNPD…ELRARVSNLI (116 aa). Residue Asp-500 is modified to 4-aspartylphosphate. Positions 611 to 681 constitute a PAS 2 domain; that stretch reads SEARWKAVYE…QRLARLLQSG (71 aa). In terms of domain architecture, PAC 2 spans 685-737; the sequence is YSVECSYLCKNGSTIWANASVSLMSPRVDEPQVILQIIDDITEKKQAQETLNQ. In terms of domain architecture, Histidine kinase 2 spans 757–973; that stretch reads YIAHEINQPL…ACFFVSIPVS (217 aa). His-760 is modified (phosphohistidine).

In terms of processing, autophosphorylated. Activation requires a sequential transfer of a phosphate group from a His in the primary transmitter domain, to an Asp in the receiver domain and to a His in the secondary transmitter domain.

The protein localises to the cytoplasm. It catalyses the reaction ATP + protein L-histidine = ADP + protein N-phospho-L-histidine.. Its activity is regulated as follows. Activity is regulated by agonists and antagonists. Binding of agonists such as toluene or benzene to TmoS stimulates autophosphorylation. Toluene causes the most pronounced increase, followed by benzene, chlorobenzene and ethylbenzene. Activity is inhibited by antagonists such as o-xylene, o-chlorotoluene and trimethylbenzene isomers, which bind to TmoS but do not stimulate autophosphorylation. Functionally, member of the two-component regulatory system TmoS/TmoT involved in the regulation of toluene degradation. Probably phosphorylates TmoT via a four-step phosphorelay in response to toluene. Can also be induced by benzene and ethylbenzene. This Ectopseudomonas mendocina (Pseudomonas mendocina) protein is Sensor histidine kinase TmoS (tmoS).